The following is a 542-amino-acid chain: Membrane protein insertase YidC (542 aa).

5 consecutive transmembrane segments (helical) span residues 7-27, 338-358, 417-437, 455-475, and 494-514; these read LLVM…QQDF, FALL…IIGV, MGGC…YWTF, LSAQ…MFLL, and FMPV…VLYW.

It belongs to the OXA1/ALB3/YidC family. Type 1 subfamily. In terms of assembly, interacts with the Sec translocase complex via SecD. Specifically interacts with transmembrane segments of nascent integral membrane proteins during membrane integration.

The protein localises to the cell inner membrane. Required for the insertion and/or proper folding and/or complex formation of integral membrane proteins into the membrane. Involved in integration of membrane proteins that insert both dependently and independently of the Sec translocase complex, as well as at least some lipoproteins. Aids folding of multispanning membrane proteins. The chain is Membrane protein insertase YidC from Actinobacillus pleuropneumoniae serotype 3 (strain JL03).